Reading from the N-terminus, the 175-residue chain is ATP-dependent protease subunit HslV (175 aa).

Residue Thr-2 is part of the active site. The Na(+) site is built by Ala-159, Asp-162, and Thr-165.

It belongs to the peptidase T1B family. HslV subfamily. In terms of assembly, a double ring-shaped homohexamer of HslV is capped on each side by a ring-shaped HslU homohexamer. The assembly of the HslU/HslV complex is dependent on binding of ATP.

The protein resides in the cytoplasm. The catalysed reaction is ATP-dependent cleavage of peptide bonds with broad specificity.. With respect to regulation, allosterically activated by HslU binding. Functionally, protease subunit of a proteasome-like degradation complex believed to be a general protein degrading machinery. In Ligilactobacillus salivarius (strain UCC118) (Lactobacillus salivarius), this protein is ATP-dependent protease subunit HslV.